The chain runs to 483 residues: Glutamyl-tRNA(Gln) amidotransferase subunit A (483 aa).

Residues Lys75 and Ser150 each act as charge relay system in the active site. Ser174 (acyl-ester intermediate) is an active-site residue.

This sequence belongs to the amidase family. GatA subfamily. Heterotrimer of A, B and C subunits.

The catalysed reaction is L-glutamyl-tRNA(Gln) + L-glutamine + ATP + H2O = L-glutaminyl-tRNA(Gln) + L-glutamate + ADP + phosphate + H(+). Functionally, allows the formation of correctly charged Gln-tRNA(Gln) through the transamidation of misacylated Glu-tRNA(Gln) in organisms which lack glutaminyl-tRNA synthetase. The reaction takes place in the presence of glutamine and ATP through an activated gamma-phospho-Glu-tRNA(Gln). This is Glutamyl-tRNA(Gln) amidotransferase subunit A from Legionella pneumophila (strain Paris).